The chain runs to 326 residues: tRNA U34 carboxymethyltransferase (326 aa).

Carboxy-S-adenosyl-L-methionine contacts are provided by residues K95, W109, K114, G134, 184-185 (VE), Y204, and R319.

The protein belongs to the class I-like SAM-binding methyltransferase superfamily. CmoB family.

It catalyses the reaction carboxy-S-adenosyl-L-methionine + 5-hydroxyuridine(34) in tRNA = 5-carboxymethoxyuridine(34) in tRNA + S-adenosyl-L-homocysteine + H(+). Catalyzes carboxymethyl transfer from carboxy-S-adenosyl-L-methionine (Cx-SAM) to 5-hydroxyuridine (ho5U) to form 5-carboxymethoxyuridine (cmo5U) at position 34 in tRNAs. This Trichodesmium erythraeum (strain IMS101) protein is tRNA U34 carboxymethyltransferase.